A 389-amino-acid polypeptide reads, in one-letter code: Probable peptide chain release factor 1, mitochondrial (389 aa).

Residue glutamine 259 is modified to N5-methylglutamine.

This sequence belongs to the prokaryotic/mitochondrial release factor family. Methylation of glutamine in the GGQ triplet is conserved from bacteria to mammals.

Its subcellular location is the mitochondrion. Mitochondrial peptide chain release factor that directs the termination of translation in response to the peptide chain termination codons UAA and UAG. The protein is Probable peptide chain release factor 1, mitochondrial of Caenorhabditis elegans.